We begin with the raw amino-acid sequence, 733 residues long: Catalase-peroxidase (733 aa).

Positions 1–25 (MNEERKCPITGATHKPSAEKGRSNH) are disordered. Basic and acidic residues predominate over residues 16–25 (PSAEKGRSNH). A cross-link (tryptophyl-tyrosyl-methioninium (Trp-Tyr) (with M-245)) is located at residues 96 to 219 (WHSAGTYRTS…LAAVQMGLIY (124 aa)). The active-site Proton acceptor is the His-97. A cross-link (tryptophyl-tyrosyl-methioninium (Tyr-Met) (with W-96)) is located at residues 219-245 (YVNPEGPNGKPDPLAAAKDIRETFARM). His-260 contributes to the heme b binding site.

The protein belongs to the peroxidase family. Peroxidase/catalase subfamily. In terms of assembly, homodimer or homotetramer. It depends on heme b as a cofactor. Post-translationally, formation of the three residue Trp-Tyr-Met cross-link is important for the catalase, but not the peroxidase activity of the enzyme.

It carries out the reaction H2O2 + AH2 = A + 2 H2O. It catalyses the reaction 2 H2O2 = O2 + 2 H2O. Bifunctional enzyme with both catalase and broad-spectrum peroxidase activity. In Chlorobium chlorochromatii (strain CaD3), this protein is Catalase-peroxidase.